The chain runs to 267 residues: Hydroxyethylthiazole kinase (267 aa).

M44 lines the substrate pocket. ATP contacts are provided by R120 and T165. G192 is a substrate binding site.

The protein belongs to the Thz kinase family. Mg(2+) is required as a cofactor.

The enzyme catalyses 5-(2-hydroxyethyl)-4-methylthiazole + ATP = 4-methyl-5-(2-phosphooxyethyl)-thiazole + ADP + H(+). It functions in the pathway cofactor biosynthesis; thiamine diphosphate biosynthesis; 4-methyl-5-(2-phosphoethyl)-thiazole from 5-(2-hydroxyethyl)-4-methylthiazole: step 1/1. Functionally, catalyzes the phosphorylation of the hydroxyl group of 4-methyl-5-beta-hydroxyethylthiazole (THZ). The sequence is that of Hydroxyethylthiazole kinase from Carboxydothermus hydrogenoformans (strain ATCC BAA-161 / DSM 6008 / Z-2901).